The sequence spans 882 residues: Translation initiation factor IF-2 (882 aa).

3 stretches are compositionally biased toward polar residues: residues 38–56, 97–124, and 140–192; these read NDSN…AEYS, GGYS…YSQN, and GGYS…NRDS. Disordered stretches follow at residues 38–192 and 236–274; these read NDSN…NRDS and STPA…AETE. The segment covering 243–259 has biased composition (basic and acidic residues); sequence ENSKELNRKLGEKKKQQ. One can recognise a tr-type G domain in the interval 380 to 553; sequence EKPPVITIMG…DMMLLKANPS (174 aa). Residues 389 to 396 are G1; sequence GHVDHGKT. Residue 389–396 participates in GTP binding; it reads GHVDHGKT. The interval 414-418 is G2; it reads GITQH. The interval 435 to 438 is G3; sequence DTPG. GTP is bound by residues 435–439 and 489–492; these read DTPGH and NKID. The tract at residues 489-492 is G4; sequence NKID. A G5 region spans residues 525–527; it reads SAL.

Belongs to the TRAFAC class translation factor GTPase superfamily. Classic translation factor GTPase family. IF-2 subfamily.

It is found in the cytoplasm. In terms of biological role, one of the essential components for the initiation of protein synthesis. Protects formylmethionyl-tRNA from spontaneous hydrolysis and promotes its binding to the 30S ribosomal subunits. Also involved in the hydrolysis of GTP during the formation of the 70S ribosomal complex. The protein is Translation initiation factor IF-2 (infB) of Borreliella burgdorferi (strain ATCC 35210 / DSM 4680 / CIP 102532 / B31) (Borrelia burgdorferi).